The following is a 179-amino-acid chain: Adenine phosphoribosyltransferase (179 aa).

It belongs to the purine/pyrimidine phosphoribosyltransferase family. In terms of assembly, homodimer.

Its subcellular location is the cytoplasm. It carries out the reaction AMP + diphosphate = 5-phospho-alpha-D-ribose 1-diphosphate + adenine. The protein operates within purine metabolism; AMP biosynthesis via salvage pathway; AMP from adenine: step 1/1. Functionally, catalyzes a salvage reaction resulting in the formation of AMP, that is energically less costly than de novo synthesis. The sequence is that of Adenine phosphoribosyltransferase from Helicobacter acinonychis (strain Sheeba).